The sequence spans 666 residues: Putative cysteine-rich receptor-like protein kinase 31 (666 aa).

The first 23 residues, 1-23 (MCLNTLCAILCFVLTVSFGFVSA), serve as a signal peptide directing secretion. 2 consecutive Gnk2-homologous domains span residues 24–130 (QKCG…NNSF) and 136–245 (LEPT…GYKY). The Extracellular segment spans residues 24–280 (QKCGESVFFR…PDGKKISTGV (257 aa)). N-linked (GlcNAc...) asparagine glycosylation is found at Asn-52, Asn-62, Asn-104, Asn-127, and Asn-151. Residues 281–301 (IVAIVVSAVIFVVLVALGLVI) form a helical membrane-spanning segment. The Cytoplasmic portion of the chain corresponds to 302 to 666 (WKRRQSYKTL…SASITRATPR (365 aa)). In terms of domain architecture, Protein kinase spans 339–616 (FSRNNKLGQG…IFQMLTNSSI (278 aa)). Residues 345–353 (LGQGGFGEV) and Lys-367 contribute to the ATP site. Residue Tyr-412 is modified to Phosphotyrosine. Asp-464 serves as the catalytic Proton acceptor. Ser-468 carries the post-translational modification Phosphoserine. At Thr-504 the chain carries Phosphothreonine. At Tyr-512 the chain carries Phosphotyrosine.

The protein belongs to the protein kinase superfamily. Ser/Thr protein kinase family. CRK subfamily.

Its subcellular location is the membrane. The enzyme catalyses L-seryl-[protein] + ATP = O-phospho-L-seryl-[protein] + ADP + H(+). It catalyses the reaction L-threonyl-[protein] + ATP = O-phospho-L-threonyl-[protein] + ADP + H(+). This Arabidopsis thaliana (Mouse-ear cress) protein is Putative cysteine-rich receptor-like protein kinase 31 (CRK31).